The chain runs to 110 residues: Large ribosomal subunit protein uL22 (110 aa).

It belongs to the universal ribosomal protein uL22 family. As to quaternary structure, part of the 50S ribosomal subunit.

Its function is as follows. This protein binds specifically to 23S rRNA; its binding is stimulated by other ribosomal proteins, e.g. L4, L17, and L20. It is important during the early stages of 50S assembly. It makes multiple contacts with different domains of the 23S rRNA in the assembled 50S subunit and ribosome. The globular domain of the protein is located near the polypeptide exit tunnel on the outside of the subunit, while an extended beta-hairpin is found that lines the wall of the exit tunnel in the center of the 70S ribosome. The sequence is that of Large ribosomal subunit protein uL22 from Photorhabdus laumondii subsp. laumondii (strain DSM 15139 / CIP 105565 / TT01) (Photorhabdus luminescens subsp. laumondii).